We begin with the raw amino-acid sequence, 141 residues long: Nucleoside diphosphate kinase (141 aa).

Lysine 11, phenylalanine 59, arginine 87, threonine 93, arginine 104, and asparagine 114 together coordinate ATP. Histidine 117 serves as the catalytic Pros-phosphohistidine intermediate.

It belongs to the NDK family. As to quaternary structure, homotetramer. Requires Mg(2+) as cofactor.

It is found in the cytoplasm. It catalyses the reaction a 2'-deoxyribonucleoside 5'-diphosphate + ATP = a 2'-deoxyribonucleoside 5'-triphosphate + ADP. It carries out the reaction a ribonucleoside 5'-diphosphate + ATP = a ribonucleoside 5'-triphosphate + ADP. Functionally, major role in the synthesis of nucleoside triphosphates other than ATP. The ATP gamma phosphate is transferred to the NDP beta phosphate via a ping-pong mechanism, using a phosphorylated active-site intermediate. The sequence is that of Nucleoside diphosphate kinase from Paraburkholderia phymatum (strain DSM 17167 / CIP 108236 / LMG 21445 / STM815) (Burkholderia phymatum).